The following is a 600-amino-acid chain: MYILVLTVPLLGALVSGLFGRKIGEKGAGIFTSGCLIISLSWSLLIFYETTLNFSTTYIKLWRWLDSDLVTAYFGLQFDSLTAVMLIVVTSISTLVHIFSTAYMDGDPHVPRFMSYLSLFTFFMILLVTSDNYPQLFIGWEGVGLCSYLLINFWLTRIEANKAAIKAMLVNRVGDIGFVLAMLAIWDQFGCLDFASVFNIVALAPSDNTTLICLFLFIGAVGKSAQLGLHTWLPDAMEGPTPVSALIHAATMVTAGVFLLIRSSPLLEQAPMALMVVTIVGSLTAFMAATIGLVQNDLKKVIAYSTCSQLGYMVMACGLSQYSISLFHLMNHAFFKALLFLSAGSVIHALADEQDMRKMGGLIRSIPFTYTMIVIGSLSLMGFPYLTGFYSKDLILELAYDQYYLAFAHWLGVFSALLTAAYSLRLIYLTFISNTNAKKEVFSQAHEGSWNLTLPLILLALGSIFVGYLTKEIIWSFQITLSPIIPTSIKLMPVIFSLFGAGTAVVLYHYSSRIFNAPTSPVGLAGYTFLYSAWQFNYIINHFLVQNVWRLGHLITFRVLDKGVLELIGPKGISQFMIRLTQEISNLQSGLVYNYALMIL.

16 helical membrane-spanning segments follow: residues 1-21, 27-47, 81-101, 110-130, 136-156, 178-198, 200-220, 241-261, 274-294, 301-323, 327-347, 366-386, 404-424, 450-470, 488-508, and 520-540; these read MYIL…LFGR, GAGI…LLIF, LTAV…IFST, VPRF…LVTS, LFIG…FWLT, FVLA…ASVF, IVAL…FIGA, TPVS…FLLI, LMVV…IGLV, VIAY…SQYS, FHLM…GSVI, IPFT…FPYL, YLAF…AYSL, WNLT…GYLT, SIKL…VVLY, and SPVG…NYII.

The protein belongs to the complex I subunit 5 family.

It is found in the mitochondrion inner membrane. It carries out the reaction a ubiquinone + NADH + 5 H(+)(in) = a ubiquinol + NAD(+) + 4 H(+)(out). Its function is as follows. Core subunit of the mitochondrial membrane respiratory chain NADH dehydrogenase (Complex I) that is believed to belong to the minimal assembly required for catalysis. Complex I functions in the transfer of electrons from NADH to the respiratory chain. The immediate electron acceptor for the enzyme is believed to be ubiquinone. This chain is NADH-ubiquinone oxidoreductase chain 5 (ND5), found in Metridium senile (Brown sea anemone).